Here is a 250-residue protein sequence, read N- to C-terminus: Leucyl/phenylalanyl-tRNA--protein transferase (250 aa).

It belongs to the L/F-transferase family.

The protein localises to the cytoplasm. The enzyme catalyses N-terminal L-lysyl-[protein] + L-leucyl-tRNA(Leu) = N-terminal L-leucyl-L-lysyl-[protein] + tRNA(Leu) + H(+). The catalysed reaction is N-terminal L-arginyl-[protein] + L-leucyl-tRNA(Leu) = N-terminal L-leucyl-L-arginyl-[protein] + tRNA(Leu) + H(+). It catalyses the reaction L-phenylalanyl-tRNA(Phe) + an N-terminal L-alpha-aminoacyl-[protein] = an N-terminal L-phenylalanyl-L-alpha-aminoacyl-[protein] + tRNA(Phe). In terms of biological role, functions in the N-end rule pathway of protein degradation where it conjugates Leu, Phe and, less efficiently, Met from aminoacyl-tRNAs to the N-termini of proteins containing an N-terminal arginine or lysine. The chain is Leucyl/phenylalanyl-tRNA--protein transferase from Cupriavidus pinatubonensis (strain JMP 134 / LMG 1197) (Cupriavidus necator (strain JMP 134)).